The chain runs to 122 residues: Small ribosomal subunit protein uS13 (122 aa).

Residues 94–122 (KQLPVRGQRTHTNARTRKGKAKPIAGKKK) form a disordered region.

The protein belongs to the universal ribosomal protein uS13 family. Part of the 30S ribosomal subunit. Forms a loose heterodimer with protein S19. Forms two bridges to the 50S subunit in the 70S ribosome.

Located at the top of the head of the 30S subunit, it contacts several helices of the 16S rRNA. In the 70S ribosome it contacts the 23S rRNA (bridge B1a) and protein L5 of the 50S subunit (bridge B1b), connecting the 2 subunits; these bridges are implicated in subunit movement. Contacts the tRNAs in the A and P-sites. This chain is Small ribosomal subunit protein uS13, found in Methylorubrum extorquens (strain PA1) (Methylobacterium extorquens).